A 301-amino-acid chain; its full sequence is Peptidyl-prolyl cis-trans isomerase E (301 aa).

In terms of domain architecture, RRM spans 5–83 (KRVLYVGGLA…GRTIRVNLAK (79 aa)). Residues Ser91, Ser97, and Ser119 each carry the phosphoserine modification. Residues 107–140 (GKTLEENKEEEGSEPPKAETQEGEPAAKKARSNP) form a disordered region. The 157-residue stretch at 143–299 (YMDIKIGNKP…QKVIIADCGE (157 aa)) folds into the PPIase cyclophilin-type domain.

It belongs to the cyclophilin-type PPIase family. PPIase E subfamily. In terms of assembly, identified in the spliceosome C complex. Component of the XAB2 complex, a multimeric protein complex composed of XAB2, PRPF19, AQR, ZNF830, ISY1, and PPIE. Identified in a pentameric intron-binding (IB) complex composed of AQR, XAB2, ISY1, ZNF830 and PPIE that is incorporated into the spliceosome as a preassembled complex. The IB complex does not contain PRPF19. Interacts (via RNA-binding domain) with KMT2A (via the third PHD-type zinc-finger).

It is found in the nucleus. The catalysed reaction is [protein]-peptidylproline (omega=180) = [protein]-peptidylproline (omega=0). Functionally, involved in pre-mRNA splicing as component of the spliceosome. Combines RNA-binding and PPIase activities. Binds mRNA and has a preference for single-stranded RNA molecules with poly-A and poly-U stretches, suggesting it binds to the poly(A)-region in the 3'-UTR of mRNA molecules. Catalyzes the cis-trans isomerization of proline imidic peptide bonds in proteins. Inhibits KMT2A activity; this requires proline isomerase activity. The chain is Peptidyl-prolyl cis-trans isomerase E (PPIE) from Pongo abelii (Sumatran orangutan).